Here is a 64-residue protein sequence, read N- to C-terminus: Large ribosomal subunit protein bL35 (64 aa).

Residues 1–23 (MPKMKTKSGAAKRFKKTANGFKH) are disordered.

It belongs to the bacterial ribosomal protein bL35 family.

The sequence is that of Large ribosomal subunit protein bL35 from Stutzerimonas stutzeri (strain A1501) (Pseudomonas stutzeri).